The primary structure comprises 112 residues: Small ribosomal subunit protein bS6 (112 aa).

It belongs to the bacterial ribosomal protein bS6 family.

In terms of biological role, binds together with bS18 to 16S ribosomal RNA. The polypeptide is Small ribosomal subunit protein bS6 (Chlamydia caviae (strain ATCC VR-813 / DSM 19441 / 03DC25 / GPIC) (Chlamydophila caviae)).